The chain runs to 204 residues: Peptide deformylase (204 aa).

2 residues coordinate Fe cation: C131 and H174. The active site involves E175. H178 contacts Fe cation.

Belongs to the polypeptide deformylase family. Fe(2+) is required as a cofactor.

The catalysed reaction is N-terminal N-formyl-L-methionyl-[peptide] + H2O = N-terminal L-methionyl-[peptide] + formate. Removes the formyl group from the N-terminal Met of newly synthesized proteins. Requires at least a dipeptide for an efficient rate of reaction. N-terminal L-methionine is a prerequisite for activity but the enzyme has broad specificity at other positions. In Streptococcus pyogenes serotype M49 (strain NZ131), this protein is Peptide deformylase.